Reading from the N-terminus, the 89-residue chain is Large ribosomal subunit protein L37-2 (89 aa).

Cys19, Cys22, Cys34, and Cys37 together coordinate Zn(2+). The C4-type zinc-finger motif lies at 19 to 37 (CRRCGNSSYHLQKSKCSQC).

It belongs to the eukaryotic ribosomal protein eL37 family. Requires Zn(2+) as cofactor.

Binds to the 23S rRNA. In Drosophila melanogaster (Fruit fly), this protein is Large ribosomal subunit protein L37-2.